The primary structure comprises 130 residues: MYRAVTRQIEVTVEPNFVPEQSSADRSRYFWSYTIVITNSGEETVQLKTRHWIITDATGRQQEVKGEGVVGEQPTLAPGERFEYTSGVPLSTASGFMTGRYQMVSESGERFEIDVPTFSLDSPDNKRVLN.

The ApaG domain occupies 3–127; that stretch reads RAVTRQIEVT…FSLDSPDNKR (125 aa).

In Bradyrhizobium diazoefficiens (strain JCM 10833 / BCRC 13528 / IAM 13628 / NBRC 14792 / USDA 110), this protein is Protein ApaG.